A 501-amino-acid chain; its full sequence is Glycoprotein 3-alpha-L-fucosyltransferase A (501 aa).

At 1-39 the chain is on the cytoplasmic side; that stretch reads MGVFSNLRGPKIGLTHEELPVVANGSTSSSSSPSSFKRK. Residues 40 to 60 form a helical; Signal-anchor for type II membrane protein membrane-spanning segment; that stretch reads VSTFLPICVALVVIIEIGFLC. Over 61-501 the chain is Lumenal; sequence RLDNASLVDT…PCPKFEVVFV (441 aa). 4 N-linked (GlcNAc...) asparagine glycosylation sites follow: Asn64, Asn337, Asn420, and Asn481.

It belongs to the glycosyltransferase 10 family. Requires Mg(2+) as cofactor. Mn(2+) is required as a cofactor. In terms of processing, glycosylation may be important for enzymatic activity.

It is found in the golgi apparatus. Its subcellular location is the golgi stack membrane. The enzyme catalyses N(4)-{beta-D-GlcNAc-(1-&gt;2)-alpha-D-Man-(1-&gt;3)-[beta-D-GlcNAc-(1-&gt;2)-alpha-D-Man-(1-&gt;6)]-beta-D-Man-(1-&gt;4)-beta-D-GlcNAc-(1-&gt;4)-beta-D-GlcNAc}-L-asparaginyl-[protein] + GDP-beta-L-fucose = N(4)-{beta-D-GlcNAc-(1-&gt;2)-alpha-D-Man-(1-&gt;3)-[beta-D-GlcNAc-(1-&gt;2)-alpha-D-Man-(1-&gt;6)]-beta-D-Man-(1-&gt;4)-beta-D-GlcNAc-(1-&gt;4)-[alpha-L-Fuc(1-&gt;3)]-beta-D-GlcNAc}-L-asparaginyl-[protein] + GDP + H(+). Its pathway is protein modification; protein glycosylation. Inhibited by Cu(2+) and Zn(2+). In terms of biological role, involved in cell wall synthesis. Preferentially catalyzes the addition of fucose in alpha 1-3 linkage to the first GlcNAc residue next to the peptide chains in N-glycans. The protein is Glycoprotein 3-alpha-L-fucosyltransferase A (FUT11) of Arabidopsis thaliana (Mouse-ear cress).